Consider the following 61-residue polypeptide: Small ribosomal subunit protein uS14 (61 aa).

Cys24, Cys27, Cys40, and Cys43 together coordinate Zn(2+).

The protein belongs to the universal ribosomal protein uS14 family. Zinc-binding uS14 subfamily. As to quaternary structure, part of the 30S ribosomal subunit. Contacts proteins S3 and S10. Zn(2+) is required as a cofactor.

Its function is as follows. Binds 16S rRNA, required for the assembly of 30S particles and may also be responsible for determining the conformation of the 16S rRNA at the A site. This Fervidobacterium nodosum (strain ATCC 35602 / DSM 5306 / Rt17-B1) protein is Small ribosomal subunit protein uS14.